Consider the following 248-residue polypeptide: ATP synthase subunit a, chloroplastic (248 aa).

A run of 5 helical transmembrane segments spans residues 38–58, 96–116, 135–155, 200–220, and 221–241; these read QVLL…TIAV, VPFI…GALL, INTT…AGLT, LVVA…VMFL, and GLFT…AYIG.

The protein belongs to the ATPase A chain family. F-type ATPases have 2 components, CF(1) - the catalytic core - and CF(0) - the membrane proton channel. CF(1) has five subunits: alpha(3), beta(3), gamma(1), delta(1), epsilon(1). CF(0) has four main subunits: a, b, b' and c.

The protein resides in the plastid. It localises to the chloroplast thylakoid membrane. Its function is as follows. Key component of the proton channel; it plays a direct role in the translocation of protons across the membrane. This Pinus thunbergii (Japanese black pine) protein is ATP synthase subunit a, chloroplastic.